The sequence spans 357 residues: Neurogenic differentiation factor 1 (357 aa).

The segment at 1–94 is disordered; sequence MTKSYSESGL…GPKKKKMTKA (94 aa). Residues 58-78 are compositionally biased toward acidic residues; it reads EEEEEDEDLEEEEEEEEEEED. Residues 81-93 are compositionally biased toward basic residues; sequence PKRRGPKKKKMTK. Residues 87 to 93 carry the Nuclear localization signal motif; the sequence is KKKKMTK. The bHLH domain maps to 101-153; that stretch reads LRRMKANARERNRMHGLNAALDNLRKVVPCYSKTQKLSKIETLRLAKNYIWAL. 4 positions are modified to phosphoserine: Ser162, Ser259, Ser266, and Ser274. A Phosphoserine; by CaMK2 modification is found at Ser336.

In terms of assembly, efficient DNA-binding requires dimerization with another bHLH protein. Heterodimer with TCF3/E47; the heterodimer is inhibited in presence of ID2, but not NR0B2, to E-box element. Interacts with EP300; the interaction is inhibited by NR0B2. Interacts with RREB1. Interacts with ATOH8. In terms of processing, in islet cells, phosphorylated on Ser-274 upon glucose stimulation; which may be required for nuclear localization. In activated neurons, phosphorylated on Ser-336; which promotes dendritic growth. Phosphorylated by MAPK1; phosphorylation regulates heterodimerization and DNA-binding activities. Phosphorylation on Ser-266 and Ser-274 increases transactivation on the insulin promoter in glucose-stimulated insulinoma cells. Expressed in pancreatic beta cells, pulmonary neuroendocrine cells and retinal interneurons amacrine cells (at protein level). Expressed in endocrine cells of the pancreas. Expressed in the inner layer of cerebellar external granular layer (EGL). Expressed in the Ammon's horn (AH), which includes the CA1-CA3 pyramidal layer and in granule cells of the dentate gyrus (DG). Expressed in photoreceptors of the outer nuclear layer (ONL), in a subset of cells in the lower half of the inner nuclear layer (INL), and in a subset of cells in the ganglion cell layer (GCL) of the retina. Expressed in cholinergic and AII amacrine cell types. Expressed in differentiating neurons of both the central and peripheral nervous systems.

It is found in the cytoplasm. The protein localises to the nucleus. Acts as a transcriptional activator: mediates transcriptional activation by binding to E box-containing promoter consensus core sequences 5'-CANNTG-3'. Associates with the p300/CBP transcription coactivator complex to stimulate transcription of the secretin gene as well as the gene encoding the cyclin-dependent kinase inhibitor CDKN1A. Contributes to the regulation of several cell differentiation pathways, like those that promote the formation of early retinal ganglion cells, inner ear sensory neurons, granule cells forming either the cerebellum or the dentate gyrus cell layer of the hippocampus, endocrine islet cells of the pancreas and enteroendocrine cells of the small intestine. Together with PAX6 or SIX3, is required for the regulation of amacrine cell fate specification. Also required for dendrite morphogenesis and maintenance in the cerebellar cortex. Associates with chromatin to enhancer regulatory elements in genes encoding key transcriptional regulators of neurogenesis. The sequence is that of Neurogenic differentiation factor 1 (Neurod1) from Mus musculus (Mouse).